The sequence spans 370 residues: Protein RKD5 (370 aa).

Residues Asp-193–Lys-232 are disordered. The span at Val-202–Leu-228 shows a compositional bias: basic and acidic residues. An RWP-RK domain is found at Lys-224–Ala-309. A coiled-coil region spans residues His-283–Ile-328. Positions Asn-347–Thr-370 are disordered. Positions Lys-349–Lys-358 are enriched in basic residues.

The protein resides in the nucleus. Putative transcription factor. The polypeptide is Protein RKD5 (RKD5) (Arabidopsis thaliana (Mouse-ear cress)).